A 553-amino-acid chain; its full sequence is Methionine--tRNA ligase (553 aa).

A 'HIGH' region motif is present at residues 12-22 (PYANSQLHLGH). The Zn(2+) site is built by cysteine 144, cysteine 147, cysteine 157, and cysteine 160. A 'KMSKS' region motif is present at residues 332 to 336 (KFSKS). Lysine 335 contacts ATP.

Belongs to the class-I aminoacyl-tRNA synthetase family. MetG type 1 subfamily. In terms of assembly, monomer. Zn(2+) is required as a cofactor.

Its subcellular location is the cytoplasm. It carries out the reaction tRNA(Met) + L-methionine + ATP = L-methionyl-tRNA(Met) + AMP + diphosphate. Its function is as follows. Is required not only for elongation of protein synthesis but also for the initiation of all mRNA translation through initiator tRNA(fMet) aminoacylation. The sequence is that of Methionine--tRNA ligase from Dehalococcoides mccartyi (strain CBDB1).